The sequence spans 273 residues: Formamidopyrimidine-DNA glycosylase (273 aa).

Proline 2 serves as the catalytic Schiff-base intermediate with DNA. The active-site Proton donor is the glutamate 3. Catalysis depends on lysine 58, which acts as the Proton donor; for beta-elimination activity. The DNA site is built by histidine 91 and arginine 110. The FPG-type zinc-finger motif lies at 238 to 272 (QVYGKTGQPCPRCASMIVKIKLGGRGTHLCPHCQK). Catalysis depends on arginine 262, which acts as the Proton donor; for delta-elimination activity.

This sequence belongs to the FPG family. Monomer. Requires Zn(2+) as cofactor.

The catalysed reaction is Hydrolysis of DNA containing ring-opened 7-methylguanine residues, releasing 2,6-diamino-4-hydroxy-5-(N-methyl)formamidopyrimidine.. It catalyses the reaction 2'-deoxyribonucleotide-(2'-deoxyribose 5'-phosphate)-2'-deoxyribonucleotide-DNA = a 3'-end 2'-deoxyribonucleotide-(2,3-dehydro-2,3-deoxyribose 5'-phosphate)-DNA + a 5'-end 5'-phospho-2'-deoxyribonucleoside-DNA + H(+). Its function is as follows. Involved in base excision repair of DNA damaged by oxidation or by mutagenic agents. Acts as a DNA glycosylase that recognizes and removes damaged bases. Has a preference for oxidized purines, such as 7,8-dihydro-8-oxoguanine (8-oxoG). Has AP (apurinic/apyrimidinic) lyase activity and introduces nicks in the DNA strand. Cleaves the DNA backbone by beta-delta elimination to generate a single-strand break at the site of the removed base with both 3'- and 5'-phosphates. The chain is Formamidopyrimidine-DNA glycosylase from Streptococcus thermophilus (strain CNRZ 1066).